Reading from the N-terminus, the 135-residue chain is Ribosome-binding factor A (135 aa).

Belongs to the RbfA family. In terms of assembly, monomer. Binds 30S ribosomal subunits, but not 50S ribosomal subunits or 70S ribosomes.

The protein resides in the cytoplasm. Functionally, one of several proteins that assist in the late maturation steps of the functional core of the 30S ribosomal subunit. Associates with free 30S ribosomal subunits (but not with 30S subunits that are part of 70S ribosomes or polysomes). Required for efficient processing of 16S rRNA. May interact with the 5'-terminal helix region of 16S rRNA. The chain is Ribosome-binding factor A from Hahella chejuensis (strain KCTC 2396).